The chain runs to 155 residues: Interleukin-2 (155 aa).

Positions 1–20 (MYKMQLLSCIALMLVLVANS) are cleaved as a signal peptide. Thr-24 carries O-linked (GalNAc...) threonine glycosylation. A disulfide bond links Cys-79 and Cys-127. A glycan (N-linked (GlcNAc...) asparagine) is linked at Asn-112.

The protein belongs to the IL-2 family.

Its subcellular location is the secreted. Its function is as follows. Cytokine produced by activated CD4-positive helper T-cells and to a lesser extend activated CD8-positive T-cells and natural killer (NK) cells that plays pivotal roles in the immune response and tolerance. Binds to a receptor complex composed of either the high-affinity trimeric IL-2R (IL2RA/CD25, IL2RB/CD122 and IL2RG/CD132) or the low-affinity dimeric IL-2R (IL2RB and IL2RG). Interaction with the receptor leads to oligomerization and conformation changes in the IL-2R subunits resulting in downstream signaling starting with phosphorylation of JAK1 and JAK3. In turn, JAK1 and JAK3 phosphorylate the receptor to form a docking site leading to the phosphorylation of several substrates including STAT5. This process leads to activation of several pathways including STAT, phosphoinositide-3-kinase/PI3K and mitogen-activated protein kinase/MAPK pathways. Functions as a T-cell growth factor and can increase NK-cell cytolytic activity as well. Promotes strong proliferation of activated B-cells and subsequently immunoglobulin production. Plays a pivotal role in regulating the adaptive immune system by controlling the survival and proliferation of regulatory T-cells, which are required for the maintenance of immune tolerance. Moreover, participates in the differentiation and homeostasis of effector T-cell subsets, including Th1, Th2, Th17 as well as memory CD8-positive T-cells. This is Interleukin-2 (IL2) from Vulpes vulpes (Red fox).